The sequence spans 212 residues: LexA repressor (212 aa).

The H-T-H motif DNA-binding region spans 26–46 (VREIGEAVGLSSTSTVHGHID). Catalysis depends on for autocatalytic cleavage activity residues S128 and K171.

This sequence belongs to the peptidase S24 family. In terms of assembly, homodimer.

It carries out the reaction Hydrolysis of Ala-|-Gly bond in repressor LexA.. In terms of biological role, represses a number of genes involved in the response to DNA damage (SOS response), including recA and lexA. In the presence of single-stranded DNA, RecA interacts with LexA causing an autocatalytic cleavage which disrupts the DNA-binding part of LexA, leading to derepression of the SOS regulon and eventually DNA repair. This chain is LexA repressor, found in Oenococcus oeni (strain ATCC BAA-331 / PSU-1).